A 336-amino-acid polypeptide reads, in one-letter code: tRNA(Ile)-lysidine synthase (336 aa).

Residue 40–45 (SGGQDS) participates in ATP binding.

Belongs to the tRNA(Ile)-lysidine synthase family.

The protein resides in the cytoplasm. The enzyme catalyses cytidine(34) in tRNA(Ile2) + L-lysine + ATP = lysidine(34) in tRNA(Ile2) + AMP + diphosphate + H(+). Functionally, ligates lysine onto the cytidine present at position 34 of the AUA codon-specific tRNA(Ile) that contains the anticodon CAU, in an ATP-dependent manner. Cytidine is converted to lysidine, thus changing the amino acid specificity of the tRNA from methionine to isoleucine. In Prochlorococcus marinus (strain SARG / CCMP1375 / SS120), this protein is tRNA(Ile)-lysidine synthase.